The following is a 142-amino-acid chain: Large ribosomal subunit protein uL13 (142 aa).

It belongs to the universal ribosomal protein uL13 family. As to quaternary structure, part of the 50S ribosomal subunit.

In terms of biological role, this protein is one of the early assembly proteins of the 50S ribosomal subunit, although it is not seen to bind rRNA by itself. It is important during the early stages of 50S assembly. This chain is Large ribosomal subunit protein uL13, found in Glaesserella parasuis serovar 5 (strain SH0165) (Haemophilus parasuis).